We begin with the raw amino-acid sequence, 314 residues long: Deacetoxycephalosporin C synthase (314 aa).

The Fe2OG dioxygenase domain occupies 156–269 (DCEPLLRLRY…RTSSVFFLRP (114 aa)).

It belongs to the iron/ascorbate-dependent oxidoreductase family. Fe cation is required as a cofactor. The cofactor is L-ascorbate.

It catalyses the reaction penicillin N + 2-oxoglutarate + O2 = deacetoxycephalosporin C + succinate + CO2 + H2O. It participates in antibiotic biosynthesis; cephalosporin C biosynthesis. Functionally, catalyzes the step from penicillin N to deacetoxy-cephalosporin C. The chain is Deacetoxycephalosporin C synthase (cefE) from Amycolatopsis lactamdurans (Nocardia lactamdurans).